Here is a 142-residue protein sequence, read N- to C-terminus: U1 small nuclear ribonucleoprotein C (142 aa).

Residues 4-36 (YYCDYCDTFLTHDSPSVRKTHNGGRKHKDNVRM) form a Matrin-type zinc finger.

Belongs to the U1 small nuclear ribonucleoprotein C family. As to quaternary structure, U1 snRNP is composed of the 7 core Sm proteins B/B', D1, D2, D3, E, F and G that assemble in a heptameric protein ring on the Sm site of the small nuclear RNA to form the core snRNP, and at least 3 U1 snRNP-specific proteins U1-70K, U1-A and U1-C. U1-C interacts with U1 snRNA and the 5' splice-site region of the pre-mRNA.

The protein resides in the nucleus. Component of the spliceosomal U1 snRNP, which is essential for recognition of the pre-mRNA 5' splice-site and the subsequent assembly of the spliceosome. U1-C is directly involved in initial 5' splice-site recognition for both constitutive and regulated alternative splicing. The interaction with the 5' splice-site seems to precede base-pairing between the pre-mRNA and the U1 snRNA. Stimulates commitment or early (E) complex formation by stabilizing the base pairing of the 5' end of the U1 snRNA and the 5' splice-site region. This is U1 small nuclear ribonucleoprotein C from Caenorhabditis briggsae.